The sequence spans 248 residues: Probable transcriptional regulatory protein PSPA7_4544 (248 aa).

This sequence belongs to the TACO1 family.

The protein resides in the cytoplasm. The sequence is that of Probable transcriptional regulatory protein PSPA7_4544 from Pseudomonas paraeruginosa (strain DSM 24068 / PA7) (Pseudomonas aeruginosa (strain PA7)).